The sequence spans 98 residues: Co-chaperonin GroES (98 aa).

Belongs to the GroES chaperonin family. In terms of assembly, heptamer of 7 subunits arranged in a ring. Interacts with the chaperonin GroEL.

Its subcellular location is the cytoplasm. Functionally, together with the chaperonin GroEL, plays an essential role in assisting protein folding. The GroEL-GroES system forms a nano-cage that allows encapsulation of the non-native substrate proteins and provides a physical environment optimized to promote and accelerate protein folding. GroES binds to the apical surface of the GroEL ring, thereby capping the opening of the GroEL channel. In Bartonella bacilliformis (strain ATCC 35685 / KC583 / Herrer 020/F12,63), this protein is Co-chaperonin GroES.